Reading from the N-terminus, the 74-residue chain is Acyl carrier protein (74 aa).

Positions 1–74 (MFEKVRKIIA…DVVEYIKNNS (74 aa)) constitute a Carrier domain. S34 bears the O-(pantetheine 4'-phosphoryl)serine mark.

The protein belongs to the acyl carrier protein (ACP) family. In terms of processing, 4'-phosphopantetheine is transferred from CoA to a specific serine of apo-ACP by AcpS. This modification is essential for activity because fatty acids are bound in thioester linkage to the sulfhydryl of the prosthetic group.

Its subcellular location is the cytoplasm. Its pathway is lipid metabolism; fatty acid biosynthesis. Functionally, carrier of the growing fatty acid chain in fatty acid biosynthesis. The polypeptide is Acyl carrier protein (Acetivibrio thermocellus (strain ATCC 27405 / DSM 1237 / JCM 9322 / NBRC 103400 / NCIMB 10682 / NRRL B-4536 / VPI 7372) (Clostridium thermocellum)).